The chain runs to 1531 residues: La-related protein Larp4B (1531 aa).

The segment covering 112-147 (HTHVAHQQQQQQQQQTIQQHLHQQQQQQSPHPAQHL) has biased composition (low complexity). Disordered regions lie at residues 112 to 148 (HTHV…QHLT) and 239 to 263 (QLPA…EPNI). The 90-residue stretch at 262–351 (NIPLDKLKQM…RPNRKRCIII (90 aa)) folds into the HTH La-type RNA-binding domain. The RRM domain occupies 348-423 (CIIILREISN…KPIMARIKPK (76 aa)). Disordered stretches follow at residues 533-605 (PLPP…QGGN), 710-736 (AHSH…ASSS), 748-768 (TAPA…QQTQ), 791-1135 (QEAG…SNQQ), 1160-1211 (DVVR…TPAL), and 1251-1285 (ASSK…QPSQ). Positions 565–578 (YNNNHRGNPNNVGG) are enriched in low complexity. 2 stretches are compositionally biased toward low complexity: residues 754 to 768 (QPGQ…QQTQ) and 810 to 826 (SSNM…TSMS). The span at 860–884 (SSPSNPHPQQHLMSSSTGSNVQSAG) shows a compositional bias: polar residues. Low complexity predominate over residues 945 to 959 (ALSSQQQQHHLTTGT). Residues 966-975 (HHYHHHHHHN) show a composition bias toward basic residues. The span at 983–1004 (NSGGLGVSSGGSGGGGSGGGSG) shows a compositional bias: gly residues. The span at 1031 to 1045 (HQQQQQQQQQQQQQQ) shows a compositional bias: low complexity. The span at 1068-1086 (TSATAPHTPQATGGASLHN) shows a compositional bias: polar residues. Positions 1087–1115 (STTSSSSSTGLGQKQTLHQQQQQAPQQHQ) are enriched in low complexity. Residue Ser-1123 is modified to Phosphoserine. Residues 1164–1173 (TGGGGGGGGK) show a composition bias toward gly residues. The span at 1183 to 1200 (PQGQNQPHMAPNYQQHQP) shows a compositional bias: polar residues. The span at 1270 to 1280 (KSNKTEDEMHP) shows a compositional bias: basic and acidic residues. Phosphoserine occurs at positions 1370 and 1413. Disordered stretches follow at residues 1393 to 1418 (KAAA…TGSH) and 1450 to 1531 (GGAS…ANNS). Polar residues-rich tracts occupy residues 1467-1477 (ATNTTQGSSAV) and 1502-1515 (QHYG…TNAN).

Its function is as follows. Probable RNA binding protein. Negatively regulates myc at the protein level, via an unknown mechanism, and may therefore have a role in growth. Has no effect on myc mRNA levels. In Drosophila melanogaster (Fruit fly), this protein is La-related protein Larp4B.